The chain runs to 377 residues: Odorant receptor 30a (377 aa).

Residues Met-1–Arg-34 are Cytoplasmic-facing. A helical transmembrane segment spans residues Tyr-35–Ser-55. Residues Thr-56–Asn-65 lie on the Extracellular side of the membrane. The helical transmembrane segment at Val-66–Arg-86 threads the bilayer. Residues Phe-87 to Arg-127 lie on the Cytoplasmic side of the membrane. A helical membrane pass occupies residues Ile-128 to Ser-148. Over Glu-149–Glu-172 the chain is Extracellular. Residues Ile-173–Thr-193 form a helical membrane-spanning segment. Over Asn-194–His-254 the chain is Cytoplasmic. A helical membrane pass occupies residues Leu-255 to Ala-275. At Gln-276–Gln-280 the chain is on the extracellular side. A helical membrane pass occupies residues Thr-281 to Val-301. Residues Ala-302–Ala-344 are Cytoplasmic-facing. The chain crosses the membrane as a helical span at residues Ile-345–Ile-365. Topologically, residues Tyr-366 to Gly-377 are extracellular.

The protein belongs to the insect chemoreceptor superfamily. Heteromeric odorant receptor channel (TC 1.A.69) family. Or30a subfamily. Interacts with Orco. Complexes exist early in the endomembrane system in olfactory sensory neurons (OSNs), coupling these complexes to the conserved ciliary trafficking pathway.

It is found in the cell membrane. Odorant receptor which mediates acceptance or avoidance behavior, depending on its substrates. The odorant receptor repertoire encodes a large collection of odor stimuli that vary widely in identity, intensity, and duration. May form a complex with Orco to form odorant-sensing units, providing sensitive and prolonged odorant signaling and calcium permeability. Involved in the behavioral responses to propyl acetate and anisole. The polypeptide is Odorant receptor 30a (Or30a) (Drosophila melanogaster (Fruit fly)).